The following is a 204-amino-acid chain: 3-isopropylmalate dehydratase small subunit (204 aa).

The protein belongs to the LeuD family. LeuD type 1 subfamily. As to quaternary structure, heterodimer of LeuC and LeuD.

It carries out the reaction (2R,3S)-3-isopropylmalate = (2S)-2-isopropylmalate. It functions in the pathway amino-acid biosynthesis; L-leucine biosynthesis; L-leucine from 3-methyl-2-oxobutanoate: step 2/4. Its function is as follows. Catalyzes the isomerization between 2-isopropylmalate and 3-isopropylmalate, via the formation of 2-isopropylmaleate. The polypeptide is 3-isopropylmalate dehydratase small subunit (Ruthia magnifica subsp. Calyptogena magnifica).